A 469-amino-acid polypeptide reads, in one-letter code: Putative dipeptidase SSP1012 (469 aa).

Zn(2+) is bound at residue histidine 84. Aspartate 86 is a catalytic residue. Zn(2+) is bound at residue aspartate 115. Glutamate 149 (proton acceptor) is an active-site residue. Zn(2+) contacts are provided by glutamate 150, aspartate 173, and histidine 440.

The protein belongs to the peptidase M20A family. It depends on Zn(2+) as a cofactor.

This is Putative dipeptidase SSP1012 from Staphylococcus saprophyticus subsp. saprophyticus (strain ATCC 15305 / DSM 20229 / NCIMB 8711 / NCTC 7292 / S-41).